The sequence spans 194 residues: MFEYLYGTVEYKKMDYIAIDINGVGYRVYFPLREYEKIEVGNKYKLYIYNHIKEDTYKLIGFLDERDRKIFELLLKINGIGSSLALAVLSNFSYNKIIEIISKNDYTTLRQVPKLGEKKAQIIILDLKGKLKNLTYTEEETVSMDMLEDLVLALEGLGYNKKEIDKTLEKIDLNKFSSLEDAIKGILKNMRIGD.

The segment at 1 to 63 (MFEYLYGTVE…EDTYKLIGFL (63 aa)) is domain I. A domain II region spans residues 64–142 (DERDRKIFEL…NLTYTEEETV (79 aa)). The tract at residues 143–147 (SMDML) is flexible linker. The tract at residues 147–194 (LEDLVLALEGLGYNKKEIDKTLEKIDLNKFSSLEDAIKGILKNMRIGD) is domain III.

This sequence belongs to the RuvA family. As to quaternary structure, homotetramer. Forms an RuvA(8)-RuvB(12)-Holliday junction (HJ) complex. HJ DNA is sandwiched between 2 RuvA tetramers; dsDNA enters through RuvA and exits via RuvB. An RuvB hexamer assembles on each DNA strand where it exits the tetramer. Each RuvB hexamer is contacted by two RuvA subunits (via domain III) on 2 adjacent RuvB subunits; this complex drives branch migration. In the full resolvosome a probable DNA-RuvA(4)-RuvB(12)-RuvC(2) complex forms which resolves the HJ.

The protein resides in the cytoplasm. Its function is as follows. The RuvA-RuvB-RuvC complex processes Holliday junction (HJ) DNA during genetic recombination and DNA repair, while the RuvA-RuvB complex plays an important role in the rescue of blocked DNA replication forks via replication fork reversal (RFR). RuvA specifically binds to HJ cruciform DNA, conferring on it an open structure. The RuvB hexamer acts as an ATP-dependent pump, pulling dsDNA into and through the RuvAB complex. HJ branch migration allows RuvC to scan DNA until it finds its consensus sequence, where it cleaves and resolves the cruciform DNA. The chain is Holliday junction branch migration complex subunit RuvA from Fusobacterium nucleatum subsp. nucleatum (strain ATCC 25586 / DSM 15643 / BCRC 10681 / CIP 101130 / JCM 8532 / KCTC 2640 / LMG 13131 / VPI 4355).